The chain runs to 242 residues: UPF0273 protein TM_0370 (242 aa).

Residues 3-242 (KRVKTGIPGM…IYPSEGGEGR (240 aa)) enclose the KaiC domain. 30-37 (GGPGTGKT) contributes to the ATP binding site.

It belongs to the UPF0273 family.

This Thermotoga maritima (strain ATCC 43589 / DSM 3109 / JCM 10099 / NBRC 100826 / MSB8) protein is UPF0273 protein TM_0370.